Here is a 299-residue protein sequence, read N- to C-terminus: MDKQWAEVCCQVPAGLVDLLADFLVELSGNGVSIDNRALDTFTLDGIEELDTATVRAYFDPATDMAGQIAQIERFLGDNAAAFGGAPIPAPTVTLIRDEDWATGWRQHFVPTRIGRHLVIKPTWEPFAPEPGDQVIELDPGMAFGTGTHPTTRLCLEALETLGRPDRVLDVGTGSGILAIAAVRLGARQVIGTDIDPDAVIVAGENCALNGVEVELVTTPLALIPGRFDVVLANILAEDLVRMAGDLAAKVAAGGHLILSGILTEREAFVVEGFGRSGLALVAVSREGEWSCLVYRNEG.

S-adenosyl-L-methionine is bound by residues Thr-152, Gly-172, Asp-194, and Asn-234.

Belongs to the methyltransferase superfamily. PrmA family.

It is found in the cytoplasm. The enzyme catalyses L-lysyl-[protein] + 3 S-adenosyl-L-methionine = N(6),N(6),N(6)-trimethyl-L-lysyl-[protein] + 3 S-adenosyl-L-homocysteine + 3 H(+). Functionally, methylates ribosomal protein L11. This Geobacter sulfurreducens (strain ATCC 51573 / DSM 12127 / PCA) protein is Ribosomal protein L11 methyltransferase.